Consider the following 238-residue polypeptide: Probable transcriptional regulatory protein VPA0011 (238 aa).

It belongs to the TACO1 family.

The protein resides in the cytoplasm. The protein is Probable transcriptional regulatory protein VPA0011 of Vibrio parahaemolyticus serotype O3:K6 (strain RIMD 2210633).